The sequence spans 257 residues: MYSVCDVVRDAVAQSHLCACPNDKLPQCKGVTKAPPECSVFHVAKLQDTKFKWKYTLDPLKAQKLNQINKDIEKDAITLKLLYGIELSPEDLEWWKMQRCLINKKTGAKGGQFANKYLERQDLELLGYSPTPIIGGDFMFTALPDKVLRTIPIAWDRFLNPAMMIFFLIILLCVILGIFYVLVRNTLRRKQKIKQHQMEIKRFIKEKEQDPYIHTSFESWPADPNKEWKELIPVYEAQGYCMADYRKKLGMPPGPNC.

Helical transmembrane passes span 123–143 (LELLGYSPTPIIGGDFMFTAL) and 163–183 (MMIFFLIILLCVILGIFYVLV).

This sequence belongs to the asfivirus C257R family.

It is found in the host membrane. Its subcellular location is the virion. In African swine fever virus (isolate Tick/South Africa/Pretoriuskop Pr4/1996) (ASFV), this protein is Transmembrane protein C257L.